The following is a 195-amino-acid chain: MKLIVGLGNPGAKYRFTRHNAGFMVVDRLAGAAGTTVNRRRCFSLVGEGRLNGVRVVLAKPQTYMNLSGLAVSALCRHYRLELADLLVICDDLDLEFGRIRLRPKGGSGGHRGLASIIAALGSSDFPRVRIGIGKAEDASAHVLGEFAPEDQSGLEEILSTAALAAACACREGLDEAMSRFNSWRLMSANGTAEV.

Tyr-14 contributes to the tRNA binding site. His-19 (proton acceptor) is an active-site residue. TRNA-binding residues include Tyr-64 and Asn-66.

It belongs to the PTH family. As to quaternary structure, monomer.

The protein resides in the cytoplasm. The enzyme catalyses an N-acyl-L-alpha-aminoacyl-tRNA + H2O = an N-acyl-L-amino acid + a tRNA + H(+). Hydrolyzes ribosome-free peptidyl-tRNAs (with 1 or more amino acids incorporated), which drop off the ribosome during protein synthesis, or as a result of ribosome stalling. In terms of biological role, catalyzes the release of premature peptidyl moieties from peptidyl-tRNA molecules trapped in stalled 50S ribosomal subunits, and thus maintains levels of free tRNAs and 50S ribosomes. This chain is Peptidyl-tRNA hydrolase, found in Desulforudis audaxviator (strain MP104C).